Reading from the N-terminus, the 518-residue chain is Membrane-bound lytic murein transglycosylase F (518 aa).

The N-terminal stretch at 1–21 (MKKLKINYLFIGILALLLAVA) is a signal peptide. A non-LT domain region spans residues 22-269 (LWPSIPWFGK…RIEEKYLGHG (248 aa)). The LT domain stretch occupies residues 270–518 (DDFDYVDTRT…SRKGSEEKQN (249 aa)). The active site involves glutamate 314.

It in the N-terminal section; belongs to the bacterial solute-binding protein 3 family. This sequence in the C-terminal section; belongs to the transglycosylase Slt family.

It is found in the cell outer membrane. It catalyses the reaction Exolytic cleavage of the (1-&gt;4)-beta-glycosidic linkage between N-acetylmuramic acid (MurNAc) and N-acetylglucosamine (GlcNAc) residues in peptidoglycan, from either the reducing or the non-reducing ends of the peptidoglycan chains, with concomitant formation of a 1,6-anhydrobond in the MurNAc residue.. Murein-degrading enzyme that degrades murein glycan strands and insoluble, high-molecular weight murein sacculi, with the concomitant formation of a 1,6-anhydromuramoyl product. Lytic transglycosylases (LTs) play an integral role in the metabolism of the peptidoglycan (PG) sacculus. Their lytic action creates space within the PG sacculus to allow for its expansion as well as for the insertion of various structures such as secretion systems and flagella. The chain is Membrane-bound lytic murein transglycosylase F from Shigella dysenteriae serotype 1 (strain Sd197).